Consider the following 362-residue polypeptide: Histidinol-phosphate aminotransferase (362 aa).

Lys-222 carries the N6-(pyridoxal phosphate)lysine modification.

The protein belongs to the class-II pyridoxal-phosphate-dependent aminotransferase family. Histidinol-phosphate aminotransferase subfamily. As to quaternary structure, homodimer. It depends on pyridoxal 5'-phosphate as a cofactor.

The enzyme catalyses L-histidinol phosphate + 2-oxoglutarate = 3-(imidazol-4-yl)-2-oxopropyl phosphate + L-glutamate. It functions in the pathway amino-acid biosynthesis; L-histidine biosynthesis; L-histidine from 5-phospho-alpha-D-ribose 1-diphosphate: step 7/9. The protein is Histidinol-phosphate aminotransferase of Shewanella amazonensis (strain ATCC BAA-1098 / SB2B).